Reading from the N-terminus, the 110-residue chain is Small ribosomal subunit protein bS16 (110 aa).

The interval 84-110 (KREARNNPEKAVPRKERKAAAEAAAKK) is disordered.

The protein belongs to the bacterial ribosomal protein bS16 family.

This Rhodopseudomonas palustris (strain BisB18) protein is Small ribosomal subunit protein bS16.